A 440-amino-acid polypeptide reads, in one-letter code: Protein disulfide-isomerase 2-3 (440 aa).

Positions 1-24 are cleaved as a signal peptide; the sequence is MYKSPLTLLTLLTICFGFFDLSSA. Thioredoxin domains follow at residues 25–136 and 154–269; these read LYGS…KQIK and SKEK…ELVE. Catalysis depends on nucleophile residues C60 and C63. A disulfide bridge links C60 with C63. A disordered region spans residues 143 to 163; it reads LEGKSKPTGGGSKEKKSEPSA. Residue N168 is glycosylated (N-linked (GlcNAc...) asparagine). Catalysis depends on nucleophile residues C192 and C195. Cysteines 192 and 195 form a disulfide. Positions 437–440 match the Prevents secretion from ER motif; the sequence is KDEL.

It belongs to the protein disulfide isomerase family. In terms of tissue distribution, widely expressed.

It is found in the endoplasmic reticulum lumen. It carries out the reaction Catalyzes the rearrangement of -S-S- bonds in proteins.. Acts as a protein-folding catalyst that interacts with nascent polypeptides to catalyze the formation, isomerization, and reduction or oxidation of disulfide bonds. In Arabidopsis thaliana (Mouse-ear cress), this protein is Protein disulfide-isomerase 2-3 (PDIL2-3).